A 312-amino-acid chain; its full sequence is TATA box-binding protein-like 2 (312 aa).

The interval 65 to 115 (DELSTQDEPSQVEKESKNEDSGIYTDCPQKESTQADIDTSNSAQNTSQFNL) is disordered. Positions 75 to 84 (QVEKESKNED) are enriched in basic and acidic residues. The span at 94-115 (KESTQADIDTSNSAQNTSQFNL) shows a compositional bias: polar residues.

This sequence belongs to the TBP family. In terms of tissue distribution, in adults, expressed in the gonads, with expression much higher in the ovary than the testis (at protein level). Shows a small amount of expression in other adult organs, including the brain and kidney. Embryonic expression is mostly ubiquitous except in early gastrula embryos where expression is asymmetric.

The protein resides in the nucleus. In terms of biological role, TATA box-binding transcription factor. Members of the TBP family are differentially required to regulate transcription and development during early embryogenesis. Commits mesoderm to the hematopoietic lineage during hemopoiesis, acting via mespa. Binds to the mespa promoter. This chain is TATA box-binding protein-like 2, found in Danio rerio (Zebrafish).